We begin with the raw amino-acid sequence, 637 residues long: CREB-regulated transcription coactivator 3 (637 aa).

A Phosphoserine modification is found at serine 66. Residues 105–115 show a composition bias toward basic residues; the sequence is NRLHSSHHRPI. 2 disordered regions span residues 105–184 and 269–288; these read NRLH…SLQD and HFPS…YANI. Residue serine 133 is modified to Phosphoserine. Position 143 is a phosphothreonine (threonine 143). Serine 145 is modified (phosphoserine; by SIK2). The span at 145–159 shows a compositional bias: polar residues; the sequence is SDSALHTSASSTKSQ. Threonine 151 carries the phosphothreonine modification. A Phosphoserine modification is found at serine 293. The interval 299–462 is disordered; it reads AMTHLGISGS…QNYQPPSPVP (164 aa). The segment covering 309–337 has biased composition (polar residues); it reads PGMQNTRSNPSIQATMNNNSLASNVNSHT. Positions 344–365 are enriched in low complexity; the sequence is PALHPSLRLSSLSNPSLPTSAL. 2 positions are modified to phosphoserine: serine 377 and serine 396. Residues 377 to 395 are compositionally biased toward polar residues; sequence SPLTLTPGSESNRSISNQF. The segment covering 396–407 has biased composition (low complexity); that stretch reads SPTSPMNMPPNS. Pro residues predominate over residues 418–429; the sequence is SLPPLEPPPPYP. The segment covering 430–447 has biased composition (low complexity); the sequence is LYSDQPQPHLHHTQQQMH. Phosphoserine is present on serine 561. Residues 615–637 are disordered; it reads MLSDPDMVLPDPSIEDSFRSDKL.

It belongs to the TORC family. Binding, as a tetramer, through its N-terminal region, with the bZIP domain of creb1 enhances recruitment of taf4 to the promoter. 'Arg-300' in the bZIP domain of creb1 is essential for this interaction.

The protein localises to the nucleus. It is found in the cytoplasm. Transcriptional coactivator for creb1 which activates transcription through both consensus and variant cAMP response element (CRE) sites. Acts as a coactivator, in the SIK/TORC signaling pathway, being active when dephosphorylated and acts independently of creb1 'Ser-119' phosphorylation. Enhances the interaction of creb1 with taf4. Regulates the expression of specific CREB-activated genes such as the steroidogenic gene, StAR. Potent coactivator of ppargc1a and inducer of mitochondrial biogenesis in muscle cells. The sequence is that of CREB-regulated transcription coactivator 3 (crtc3) from Xenopus tropicalis (Western clawed frog).